The following is a 213-amino-acid chain: Cytochrome c biogenesis ATP-binding export protein CcmA (213 aa).

The ABC transporter domain occupies 8 to 213; it reads LQATALTCER…RDIDLGQWAA (206 aa). Residue 40–47 coordinates ATP; sequence GPNGSGKT.

The protein belongs to the ABC transporter superfamily. CcmA exporter (TC 3.A.1.107) family. The complex is composed of two ATP-binding proteins (CcmA) and two transmembrane proteins (CcmB).

The protein resides in the cell inner membrane. The catalysed reaction is heme b(in) + ATP + H2O = heme b(out) + ADP + phosphate + H(+). In terms of biological role, part of the ABC transporter complex CcmAB involved in the biogenesis of c-type cytochromes; once thought to export heme, this seems not to be the case, but its exact role is uncertain. Responsible for energy coupling to the transport system. In Pseudomonas savastanoi pv. phaseolicola (strain 1448A / Race 6) (Pseudomonas syringae pv. phaseolicola (strain 1448A / Race 6)), this protein is Cytochrome c biogenesis ATP-binding export protein CcmA.